The chain runs to 4493 residues: Mucin-17 (4493 aa).

The N-terminal stretch at 1 to 25 (MPRPGTMALCLLTLVLSLLPPQAAA) is a signal peptide. At 26–4393 (EQDLSVNRAV…QGTQKSLVYG (4368 aa)) the chain is on the extracellular side. Residues 88 to 105 (NPEMTSIESSVTSDTPGV) are compositionally biased toward polar residues. 4 disordered regions span residues 88 to 159 (NPEM…SISS), 188 to 223 (LTTSTQASSSPTTPESTTIPKSTNSEGSTPLTSMPA), 248 to 277 (TISAQASSSPTTAEGPSLSNSAPSGGSTPL), and 306 to 344 (VITSTEASSSPTTAEGTSIPTSTYTEGSTPLTSTPASTM). Residues 106–146 (SSTRMTPTESRTTSESTSDSTTLFPSSTEDTSSPTTPEGTD) show a composition bias toward low complexity. The span at 148-159 (PMSTPSEESISS) shows a compositional bias: polar residues. A run of 57 repeats spans residues 185 to 245 (STPL…EIST), 246 to 300 (PVTI…TTPA), 301 to 361 (ATNI…PVDT), 362 to 418 (STLV…TIPV), 420 to 477 (SKTF…TTPV), 479 to 538 (SKTQ…PVDT), 539 to 597 (STPV…PADS), 598 to 654 (NTFV…TTPV), 656 to 715 (SNTP…PVDT), 716 to 774 (STPV…PLDT), 775 to 831 (STHI…TTPV), 833 to 892 (SNSP…PVDT), 893 to 951 (STPV…PVDT), 952 to 1010 (STPV…PVDS), 1011 to 1069 (NTPL…PADT), 1070 to 1121 (STPV…ASTL), 1122 to 1187 (STTP…PVDS), 1188 to 1246 (KTQV…PVDT), 1247 to 1305 (STPV…PVDT), 1306 to 1364 (KGPV…PVDN), 1365 to 1423 (STPV…PVDT), 1424 to 1482 (STPG…PVDS), 1483 to 1541 (NSPV…PAVT), 1542 to 1600 (STPV…PIDS), 1601 to 1656 (KTQV…TTPV), 1658 to 1717 (SNSP…PVDN), 1718 to 1776 (STPV…PIDT), 1777 to 1835 (STPV…PVDS), 1836 to 1895 (NSPV…AVTS), 1896 to 1951 (TPVT…TTLA), 1953 to 2012 (TRTP…PVDT), 2013 to 2071 (STPA…PVDS), 2072 to 2127 (KTQV…TTPV), 2129 to 2188 (SNSP…PVDT), 2189 to 2247 (STPV…PVDT), 2248 to 2306 (STPV…PVDS), 2307 to 2365 (NTPF…PADT), 2366 to 2424 (STPV…PVDT), 2425 to 2483 (STPV…PVDT), 2484 to 2540 (STPM…TTPV), 2542 to 2601 (SNSP…PVDT), 2602 to 2653 (SIPV…ASTL), 2654 to 2719 (STTP…PVDT), 2720 to 2770 (STPV…EAST), 2772 to 2837 (STTA…PVDT), 2838 to 2896 (STPV…PVDT), 2897 to 2955 (SIPV…PVDT), 2956 to 3014 (RTPV…PADT), 3015 to 3073 (STPV…PVDS), 3074 to 3132 (NSPV…PVDT), 3133 to 3191 (STPV…PVDT), 3192 to 3247 (STPV…TTPV), 3249 to 3308 (SNTP…PADT), 3309 to 3367 (STPV…PVDT), 3368 to 3426 (STPV…PVDS), 3427 to 3485 (NTLV…PVDT), and 3486 to 3544 (STPV…PVDS). The 59 X approximate tandem repeats stretch occupies residues 185–3727 (STPLTTSTQA…SVVTSTPVTT (3543 aa)). A compositionally biased stretch (low complexity) spans 188-210 (LTTSTQASSSPTTPESTTIPKST). A compositionally biased stretch (polar residues) spans 211-223 (NSEGSTPLTSMPA). Residues 308–323 (TSTEASSSPTTAEGTS) are compositionally biased toward low complexity. The span at 324–344 (IPTSTYTEGSTPLTSTPASTM) shows a compositional bias: polar residues. The span at 425–441 (TTASEASSSPTTAEDTS) shows a compositional bias: low complexity. 6 disordered regions span residues 425–629 (TTAS…ERGT), 644–868 (SEAS…TPLT), 886–1104 (STTP…TPLT), 1116–1163 (SEAS…TPLA), 1175–1279 (SEAN…GSTL), and 1296–1338 (STLL…GRTP). A compositionally biased stretch (polar residues) spans 442–483 (IATSTPSEGSTPLTSMPVSTTPVASSEASNLSTTPVDSKTQV). Residue N471 is glycosylated (N-linked (GlcNAc...) asparagine). Over residues 484–497 (TTSTEASSSPPTAE) the composition is skewed to low complexity. The segment covering 498 to 528 (VNSMPTSTPSEGSTPLTSMSVSTMPVASSEA) has biased composition (polar residues). Low complexity-rich tracts occupy residues 529–573 (STLS…TPLT) and 584–618 (SSEASTTSTTPADSNTFVTTSSEASSSSTTAEGTS). Polar residues-rich tracts occupy residues 619–629 (MPTSTYSERGT) and 644–660 (SEASTLSTTPVDSNTPV). The span at 661-677 (TTSTEATSSSTTAEGTS) shows a compositional bias: low complexity. Over residues 678 to 705 (MPTSTYTEGSTPLTSMPVNTTLVASSEA) the composition is skewed to polar residues. N696 carries an N-linked (GlcNAc...) asparagine glycan. The span at 706-733 (STLSTTPVDTSTPVTTSTEASSSPTTAD) shows a compositional bias: low complexity. Residues 737 to 754 (MPTSTPSEGSTPLTSMPV) are compositionally biased toward polar residues. Low complexity predominate over residues 755–776 (SKTLLTSSEASTLSTTPLDTST). The segment covering 777–832 (HITTSTEASCSPTTTEGTSMPISTPSEGSPLLTSIPVSITPVTSPEASTLSTTPVD) has biased composition (polar residues). Residues 833 to 849 (SNSPVTTSTEVSSSPTP) show a composition bias toward low complexity. Residues 854–868 (SMPTSTYSEGRTPLT) show a composition bias toward polar residues. The segment covering 886–900 (STTPVDTSTPVTNST) has biased composition (low complexity). N-linked (GlcNAc...) asparagine glycosylation is present at N898. Over residues 901–944 (EARSSPTTSEGTSMPTSTPGEGSTPLTSMPDSTTPVVSSEARTL) the composition is skewed to polar residues. The segment covering 945–972 (SATPVDTSTPVTTSTEATSSPTTAEGTS) has biased composition (low complexity). Over residues 973-1011 (IPTSTPSEGTTPLTSTPVSHTLVANSEASTLSTTPVDSN) the composition is skewed to polar residues. A compositionally biased stretch (low complexity) spans 1012–1021 (TPLTTSTEAS). A compositionally biased stretch (polar residues) spans 1029 to 1062 (GTSMPTSTPSEGSTPLTRMPVSTTMVASSETSTL). A compositionally biased stretch (low complexity) spans 1063 to 1090 (STTPADTSTPVTTYSQASSSSTTADGTS). 2 stretches are compositionally biased toward polar residues: residues 1091-1104 (MPTSTYSEGSTPLT) and 1116-1132 (SEASTLSTTPVDTSIPV). A compositionally biased stretch (low complexity) spans 1133 to 1149 (TTSTEASSSPTTAEGTS). Polar residues-rich tracts occupy residues 1175–1198 (SEANTLSTTPVDSKTQVATSTEAS) and 1205–1222 (EVTSMPTSTPGERSTPLT). Residues 1237–1279 (STLSTSPVDTSTPVTTSAETSSSPTTAEGTSLPTSTTSEGSTL) are compositionally biased toward low complexity. 2 stretches are compositionally biased toward polar residues: residues 1310-1320 (VTSNEVSSSPT) and 1326-1338 (SMPTSTYSEGRTP). N-linked (GlcNAc...) asparagine glycosylation occurs at N1345. Positions 1360–1394 (TPVDNSTPVTTSTEACSSPTTSEGTSMPNSNPSEG) are enriched in polar residues. 20 disordered regions span residues 1360–1516 (TPVD…STAL), 1537–1575 (TPAVTSTPVTTYSQASSSPTTADGTSMQTSTYSEGSTPL), 1590–1930 (ANTL…PLTS), 1947–2163 (STTL…RTPL), 2177–2281 (AIST…TTPL), 2295–2501 (EVST…TTAE), 2524–2630 (TTPV…TPSE), 2647–2693 (SSEA…RSTP), 2709–2751 (ASTL…DGST), 2765–2853 (SSEA…SPTT), 2879–2925 (TPVA…TPSE), 2942–3167 (GSEA…TPLT), 3182–3577 (STLS…GSSS), 3589–3635 (TSSE…EVST), 3667–3701 (ITSTQVSSSPVTPEGTTMPIWTPSEGSTPLTTMPV), 3785–3812 (MTTASEGSSSPTTLEGTTTMPMSTTSER), 3829–3849 (PSEASTLSTPPGDTSTPLLTS), 3892–3914 (ASIASTPPLDTSTTFTPSTDTAS), 3965–3988 (VITSTELNTPSTSSSSTTTSFSTT), and 4008–4129 (STAP…TPTV). 2 stretches are compositionally biased toward low complexity: residues 1395 to 1415 (TTPLTSIPVSTTPVVSSEAST) and 1423 to 1442 (TSTPGTTSAEATSSPTTAEG). Residues 1461–1483 (PVSNTPVANSEASTLSTTPVDSN) are compositionally biased toward polar residues. Over residues 1484–1499 (SPVVTSTAVSSSPTPA) the composition is skewed to low complexity. The segment covering 1504 to 1516 (IAISTPSEGSTAL) has biased composition (polar residues). The span at 1537–1547 (TPAVTSTPVTT) shows a compositional bias: low complexity. Polar residues-rich tracts occupy residues 1548–1575 (YSQASSSPTTADGTSMQTSTYSEGSTPL) and 1590–1604 (ANTLSTTPIDSKTQV). The segment covering 1605–1620 (TASTEASSSTTAEGSS) has biased composition (low complexity). Polar residues-rich tracts occupy residues 1621 to 1673 (MTIS…SSPT) and 1679 to 1775 (SMPT…TPID). A compositionally biased stretch (low complexity) spans 1776–1797 (TSTPVTTSTEATSSPTTAEGTS). Positions 1798 to 1836 (IPTSTLSEGMTPLTSTPVSHTLVANSEASTLSTTPVDSN) are enriched in polar residues. Residues 1837 to 1852 (SPVVTSTAVSSSPTPA) show a composition bias toward low complexity. Residues 1856–1883 (SIATSTPSEGSTALTSIPVSTTTVASSE) show a composition bias toward polar residues. The segment covering 1884 to 1900 (TNTLSTTPAVTSTPVTT) has biased composition (low complexity). 2 stretches are compositionally biased toward polar residues: residues 1901–1921 (YAQVSSSPTTADGSSMPTSTP) and 1947–1976 (STTLADTRTPVTTYSQASSSPTTADGTSMP). Positions 1984 to 2033 (STPLTSMPLSTTLVVSSEASTLSTTPVDTSTPATTSTEGSSSPTTAGGTS) are enriched in low complexity. Polar residues-rich tracts occupy residues 2034 to 2043 (IQTSTPSERT) and 2051 to 2077 (VSTTLVVSSEGNTLSTTPVDSKTQVTN). N2077 is a glycosylation site (N-linked (GlcNAc...) asparagine). Positions 2078-2091 (STEASSSATAEGSS) are enriched in low complexity. The span at 2092-2156 (MTISAPSEGS…EGTSMQTSTY (65 aa)) shows a compositional bias: polar residues. Residues 2177–2196 (AISTLSTTPVDTSTPVTNST) show a composition bias toward low complexity. The N-linked (GlcNAc...) asparagine glycan is linked to N2194. Positions 2197 to 2240 (EARSSPTTSEGTSMPTSTPSEGSTPFTSMPVSTMPVVTSEASTL) are enriched in polar residues. Residues 2241–2268 (SATPVDTSTPVTTSTEATSSPTTAEGTS) are compositionally biased toward low complexity. Polar residues-rich tracts occupy residues 2269-2281 (IPTSTLSEGTTPL) and 2295-2307 (EVSTLSTTPVDSN). Residues 2308 to 2317 (TPFTTSTEAS) show a composition bias toward low complexity. Positions 2325–2358 (GTSMPTSTSSEGNTPLTRMPVSTTMVASFETSTL) are enriched in polar residues. Over residues 2359–2371 (STTPADTSTPVTT) the composition is skewed to low complexity. The segment covering 2372-2395 (YSQAGSSPTTADDTSMPTSTYSEG) has biased composition (polar residues). Composition is skewed to low complexity over residues 2396 to 2445 (STPL…EGTS) and 2462 to 2499 (PVSTTPVVSSEAGTLSTTPVDTSTPMTTSTEASSSPTT). Residues 2524–2547 (TTPVASPEASTLSTTPVDSNSPVV) are compositionally biased toward polar residues. The segment covering 2548 to 2563 (TSTEISSSATSAEGTS) has biased composition (low complexity). Over residues 2564–2576 (MPTSTYSEGSTPL) the composition is skewed to polar residues. Residues 2586–2617 (LASSEASTLSTTPVDTSIPVTTSTETSSSPTT) show a composition bias toward low complexity. A compositionally biased stretch (polar residues) spans 2618-2628 (AKDTSMPISTP). Low complexity predominate over residues 2654-2681 (STTPVDTRTLVTTSTGTSSSPTTAEGSS). Polar residues predominate over residues 2682–2693 (MPTSTPGERSTP). Residues 2710-2740 (STLSTTPVDTSTPVTTSAEASSSPTTAEGTS) show a composition bias toward low complexity. The span at 2741–2751 (MRISTPSDGST) shows a compositional bias: polar residues. Composition is skewed to low complexity over residues 2765–2816 (SSEA…TSMP) and 2829–2853 (TLSTTPVDTSTPVTTSTKASSSPTT). A compositionally biased stretch (polar residues) spans 2879-2900 (TPVASSEASTLSTTPVDTSIPV). Low complexity-rich tracts occupy residues 2901-2917 (TTSTEGSSSPTTAEGTS) and 2950-2976 (TTPVDTRTPVTTSAEASSSPTTAEGTS). Residues 2988–3009 (PLTSMSVSTMPVASSEASTLSR) show a composition bias toward polar residues. Residues 3010-3031 (TPADTSTPVTTSTEASSSPTTA) show a composition bias toward low complexity. The segment covering 3037–3057 (PISTPSEGSTPLTSIPVSTTP) has biased composition (polar residues). Composition is skewed to low complexity over residues 3073–3089 (SNSPVVTSTEVSSSPTP) and 3104–3140 (STPLTGVPVSTTPVTSSAISTLSTTPVDTSTPVTTST). Over residues 3141–3166 (EAHSSPTTSEGTSMPTSTPSEGSTPL) the composition is skewed to polar residues. The segment covering 3185–3211 (SATPVDTSTPVTTSTEATSSTTAEGTS) has biased composition (low complexity). Over residues 3212-3253 (IPTSTPSEGMTPLTSVPVSNTPVASSEASILSTTPVDSNTPL) the composition is skewed to polar residues. The segment covering 3254–3267 (TTSTEASSSPPTAE) has biased composition (low complexity). A compositionally biased stretch (polar residues) spans 3268-3288 (GTSMPTSTPSEGSTPLTSMPV). The span at 3289–3314 (STTTVASSETSTLSTTPADTSTPVTT) shows a compositional bias: low complexity. Residues 3329–3357 (SMPTSTYSEGSTPLTNMSFSTTPVVSSEA) are compositionally biased toward polar residues. An N-linked (GlcNAc...) asparagine glycan is attached at N3344. Residues 3358–3375 (STLSTTPVDTSTPVTTST) are compositionally biased toward low complexity. Over residues 3376-3401 (EASLSPTTAEGTSIPTSSPSEGTTPL) the composition is skewed to polar residues. A compositionally biased stretch (low complexity) spans 3405–3414 (PVSTTPVVSS). 2 stretches are compositionally biased toward polar residues: residues 3415–3441 (EVNTLSTTPVDSNTLVTTSTEASSSPT) and 3447–3475 (SLPTSTTSEGSTPLSIMPLSTTPVASSEA). Residues 3476-3501 (STLSTTPVDTSTPVTTSSPTNSSPTT) show a composition bias toward low complexity. Polar residues-rich tracts occupy residues 3502–3549 (AEVT…TFVT) and 3558–3571 (PATLQVTTMRMSTP). Residues 3589 to 3616 (TSSEASTPSTPSVDRSTPVTTSTQSNST) show a composition bias toward low complexity. 2 consecutive repeat copies span residues 3604–3662 (STPV…PVDT) and 3663–3727 (STPV…PVTT). Residues 3626–3635 (PMSTPSEVST) are compositionally biased toward polar residues. The segment covering 3667-3679 (ITSTQVSSSPVTP) has biased composition (low complexity). 2 stretches are compositionally biased toward polar residues: residues 3690-3701 (SEGSTPLTTMPV) and 3785-3806 (MTTASEGSSSPTTLEGTTTMPM). Composition is skewed to low complexity over residues 3967-3988 (TSTELNTPSTSSSSTTTSFSTT), 4008-4083 (STAP…SSTT), and 4090-4129 (TTMTTRTKPSTRTTSFPTVTTTAVPTNTTIKSNPTSTPTV). N4116 carries an N-linked (GlcNAc...) asparagine glycan. The EGF-like domain occupies 4131-4170 (RTTTCFGDGCQNTASRCKNGGTWDGLKCQCPNLYYGELCE). Disulfide bonds link C4135–C4147, C4140–C4158, and C4160–C4169. One can recognise an SEA domain in the interval 4184-4291 (ISAQMELTVT…QQIMINDICS (108 aa)). N-linked (GlcNAc...) asparagine glycosylation is found at N4205, N4236, N4267, N4297, and N4305. Residues 4394–4414 (LVGAGVVLMLIILVALLMLVF) traverse the membrane as a helical segment. Residues 4415 to 4493 (RSKREVKRQK…QRPQVMTTSF (79 aa)) lie on the Cytoplasmic side of the membrane.

As to quaternary structure, interacts via its C-terminus with PDZK1 and this interaction appears important for proper localization. In terms of processing, probably cleaved within the SEA domain. Post-translationally, N-glycosylated. Contains high mannose and complex-type glycans. The forms containing the complex type glycans localize to the cell surface. Not O-glycosylated. As to expression, expressed almost exclusively in the intestine. Expression is especially high in both the duodenum and transverse colon. Expressed in mature absorptive cells of the small intestinal villi. No expression is detected in goblet cells. Highly expressed in pancreatic adenocarcinoma tissue (at protein level). Expression is not detectable in normal pancreas, in pancreatitis or in cell lines derived from other cancers.

The protein resides in the cell membrane. It is found in the secreted. Probably plays a role in maintaining homeostasis on mucosal surfaces. This is Mucin-17 (MUC17) from Homo sapiens (Human).